Here is a 210-residue protein sequence, read N- to C-terminus: Probable septum site-determining protein MinC (210 aa).

The protein belongs to the MinC family. Interacts with MinD and FtsZ.

In terms of biological role, cell division inhibitor that blocks the formation of polar Z ring septums. Rapidly oscillates between the poles of the cell to destabilize FtsZ filaments that have formed before they mature into polar Z rings. Prevents FtsZ polymerization. The chain is Probable septum site-determining protein MinC from Clostridium novyi (strain NT).